Here is a 1241-residue protein sequence, read N- to C-terminus: DNA-directed RNA polymerase subunit beta (1241 aa).

The disordered stretch occupies residues 1186–1210 (EDEIVPTAEKRSSNQDEEALELVDN). The segment covering 1200-1210 (QDEEALELVDN) has biased composition (acidic residues).

The protein belongs to the RNA polymerase beta chain family. In terms of assembly, the RNAP catalytic core consists of 2 alpha, 1 beta, 1 beta' and 1 omega subunit. When a sigma factor is associated with the core the holoenzyme is formed, which can initiate transcription.

The catalysed reaction is RNA(n) + a ribonucleoside 5'-triphosphate = RNA(n+1) + diphosphate. DNA-dependent RNA polymerase catalyzes the transcription of DNA into RNA using the four ribonucleoside triphosphates as substrates. The chain is DNA-directed RNA polymerase subunit beta from Clostridium novyi (strain NT).